The following is a 178-amino-acid chain: uncharacterized protein (178 aa).

Belongs to the mimivirus L114/R131 family.

This is an uncharacterized protein from Acanthamoeba polyphaga mimivirus (APMV).